The sequence spans 382 residues: S-adenosylmethionine synthase (382 aa).

H16 provides a ligand contact to ATP. D18 contacts Mg(2+). Residue E44 coordinates K(+). The L-methionine site is built by E57 and Q100. Residues 100 to 110 (QSPDIAQGVDN) form a flexible loop region. ATP is bound by residues 165–167 (DAK), 231–232 (RF), D240, 246–247 (RK), and K267. An L-methionine-binding site is contributed by D240. L-methionine is bound at residue K271.

The protein belongs to the AdoMet synthase family. In terms of assembly, homotetramer; dimer of dimers. Requires Mg(2+) as cofactor. The cofactor is K(+).

It localises to the cytoplasm. It catalyses the reaction L-methionine + ATP + H2O = S-adenosyl-L-methionine + phosphate + diphosphate. The protein operates within amino-acid biosynthesis; S-adenosyl-L-methionine biosynthesis; S-adenosyl-L-methionine from L-methionine: step 1/1. Its function is as follows. Catalyzes the formation of S-adenosylmethionine (AdoMet) from methionine and ATP. The overall synthetic reaction is composed of two sequential steps, AdoMet formation and the subsequent tripolyphosphate hydrolysis which occurs prior to release of AdoMet from the enzyme. The protein is S-adenosylmethionine synthase of Legionella pneumophila subsp. pneumophila (strain Philadelphia 1 / ATCC 33152 / DSM 7513).